The chain runs to 389 residues: Chalcone synthase 3 (389 aa).

Cys-164 is a catalytic residue.

Belongs to the thiolase-like superfamily. Chalcone/stilbene synthases family.

It carries out the reaction (E)-4-coumaroyl-CoA + 3 malonyl-CoA + 3 H(+) = 2',4,4',6'-tetrahydroxychalcone + 3 CO2 + 4 CoA. It participates in secondary metabolite biosynthesis; flavonoid biosynthesis. Functionally, the primary product of this enzyme is 4,2',4',6'-tetrahydroxychalcone (also termed naringenin-chalcone or chalcone) which can under specific conditions spontaneously isomerize into naringenin. The protein is Chalcone synthase 3 (CHS3) of Trifolium subterraneum (Subterranean clover).